We begin with the raw amino-acid sequence, 280 residues long: Elongation factor Ts (280 aa).

The interval 79-82 (TDFV) is involved in Mg(2+) ion dislocation from EF-Tu.

Belongs to the EF-Ts family.

The protein localises to the cytoplasm. Associates with the EF-Tu.GDP complex and induces the exchange of GDP to GTP. It remains bound to the aminoacyl-tRNA.EF-Tu.GTP complex up to the GTP hydrolysis stage on the ribosome. In Vibrio cholerae serotype O1 (strain ATCC 39541 / Classical Ogawa 395 / O395), this protein is Elongation factor Ts.